We begin with the raw amino-acid sequence, 377 residues long: MNTFVYLLFMMAVGALIGGMTNFIAIVMLFRPYEPIYIFGKRLPLTPGLIPKRRRELAEQLGKTVVEHLVTPEGLRRKLTDPVFVAEVADWGREWLKRWLSRRETPAQLLERLGVHAPDEWLSELAAKQAGRAYEQWSETWRLRPIRDLLSPELKETMESRIESLADYLADRVIDYFSSEEGKRQIAGMIDRFFQERGMVGGMMQMLLGNVNFVDKVQSELGKFLRHAGTRAMLARLLWTEWNKWISYPLAAVEEMIGRQRIKETVSAAARGLVRNNDWLDRPLAELIAPYERELFDRFVPQAANAAIHALSDKIEGIVGKLGLADIVRNQVESFSLRRLEVIILSIARRELKMITYLGALLGAMIGAVQGIIGLWL.

Transmembrane regions (helical) follow at residues 7 to 27 and 357 to 377; these read LLFMMAVGALIGGMTNFIAIV and YLGALLGAMIGAVQGIIGLWL.

The protein belongs to the UPF0754 family.

The protein localises to the cell membrane. This Geobacillus thermodenitrificans (strain NG80-2) protein is UPF0754 membrane protein GTNG_0550.